Here is a 958-residue protein sequence, read N- to C-terminus: Dermatan-sulfate epimerase (958 aa).

The first 22 residues, 1–22, serve as a signal peptide directing secretion; the sequence is MRTHTRGAPSVFFICLFCFVSA. Residues 23–902 lie on the Lumenal side of the membrane; it reads CVTDENPEVM…APALSASYTR (880 aa). Asn183 carries N-linked (GlcNAc...) asparagine glycosylation. Catalysis depends on His205, which acts as the Proton donor. Tyr261 is an active-site residue. Residues Asn336 and Asn411 are each glycosylated (N-linked (GlcNAc...) asparagine). Mn(2+) contacts are provided by His452 and Glu470. Residue Tyr473 is part of the active site. Asn481 contacts Mn(2+). Asn642 and Asn648 each carry an N-linked (GlcNAc...) asparagine glycan. Residues 903–923 traverse the membrane as a helical segment; it reads LFLILNIAIFFVMLAMQLTYF. Over 924–933 the chain is Cytoplasmic; sequence QRAQSLHGQR. A helical transmembrane segment spans residues 934-954; the sequence is CLYAVLLIDSCILLWLYSSCS. The Lumenal portion of the chain corresponds to 955–958; sequence QSQC.

The protein belongs to the dermatan-sulfate isomerase family. The cofactor is Mn(2+). N-glycosylated. Glycosylation is important for enzymatic activity.

It localises to the endoplasmic reticulum membrane. Its subcellular location is the golgi apparatus membrane. It is found in the cytoplasmic vesicle membrane. The protein localises to the microsome membrane. The enzyme catalyses chondroitin 4'-sulfate = dermatan 4'-sulfate. The protein operates within glycan metabolism; chondroitin sulfate biosynthesis. It functions in the pathway glycan metabolism; heparan sulfate biosynthesis. Functionally, converts D-glucuronic acid to L-iduronic acid (IdoUA) residues. Plays an important role in the biosynthesis of the glycosaminoglycan/mucopolysaccharide dermatan sulfate. The polypeptide is Dermatan-sulfate epimerase (DSE) (Bos taurus (Bovine)).